The chain runs to 549 residues: Oxygen-dependent choline dehydrogenase (549 aa).

Residue 4–33 (DFVIIGSGSAGSAMAYRLSEDGRYSVIVIE) participates in FAD binding. Histidine 465 functions as the Proton acceptor in the catalytic mechanism.

The protein belongs to the GMC oxidoreductase family. It depends on FAD as a cofactor.

The enzyme catalyses choline + A = betaine aldehyde + AH2. It catalyses the reaction betaine aldehyde + NAD(+) + H2O = glycine betaine + NADH + 2 H(+). The protein operates within amine and polyamine biosynthesis; betaine biosynthesis via choline pathway; betaine aldehyde from choline (cytochrome c reductase route): step 1/1. Involved in the biosynthesis of the osmoprotectant glycine betaine. Catalyzes the oxidation of choline to betaine aldehyde and betaine aldehyde to glycine betaine at the same rate. In Brucella anthropi (strain ATCC 49188 / DSM 6882 / CCUG 24695 / JCM 21032 / LMG 3331 / NBRC 15819 / NCTC 12168 / Alc 37) (Ochrobactrum anthropi), this protein is Oxygen-dependent choline dehydrogenase.